We begin with the raw amino-acid sequence, 1430 residues long: 3'-5' RNA helicase YTHDC2 (1430 aa).

The interval 1–37 (MSRPSSVSPRQPAPGGGGGGGPSPCGPGGGGRAKGLK) is disordered. Residues 14-33 (PGGGGGGGPSPCGPGGGGRA) are compositionally biased toward gly residues. Residues 38 to 106 (DIRIDEEVKI…NRYLTVKKKD (69 aa)) form the R3H domain. Positions 203–369 (VKIIKENKVV…FGSCPVIYIQ (167 aa)) constitute a Helicase ATP-binding domain. 216 to 223 (GETGSGKT) is an ATP binding site. The DEAH box motif lies at 316 to 319 (DEVH). ANK repeat units lie at residues 506–538 (TSAT…SKAS) and 539–571 (NGWM…FGNL). In terms of domain architecture, Helicase C-terminal spans 612–784 (LLYNICHSCD…ELCLHTKLLA (173 aa)). Serine 1089, serine 1090, and serine 1092 each carry phosphoserine. Polar residues predominate over residues 1164–1174 (EQSAGLQQPSG). Positions 1164 to 1288 (EQSAGLQQPS…SPSPRPNMPV (125 aa)) are disordered. Over residues 1191–1200 (SSWRSNNSRK) the composition is skewed to low complexity. At serine 1202 the chain carries Phosphoserine. The span at 1231-1249 (KYKDRGILHPKRGTEDRSD) shows a compositional bias: basic and acidic residues. The span at 1250-1264 (QSSVKSTDSSSYPSP) shows a compositional bias: low complexity. Residues serine 1263, serine 1267, and serine 1281 each carry the phosphoserine modification. In terms of domain architecture, YTH spans 1288–1418 (VRYFIMKSSN…QVGEQLLQLW (131 aa)). Residues 1294–1296 (KSS), tryptophan 1310, and tryptophan 1360 contribute to the RNA site.

It belongs to the DEAD box helicase family. DEAH subfamily. As to quaternary structure, interacts with MEIOC; binds transcripts that regulate the mitotic cell cycle inhibiting progression into metaphase, thereby allowing meiotic prophase to proceed normally. Interacts (via ANK repeats) with XRN1. Interacts with ZCCHC4. Associates with the small ribosomal subunit. Interacts with RBM46.

Its subcellular location is the cytoplasm. The protein localises to the perinuclear region. It catalyses the reaction ATP + H2O = ADP + phosphate + H(+). In terms of biological role, 3'-5' RNA helicase that plays a key role in the male and female germline by promoting transition from mitotic to meiotic divisions in stem cells. Specifically recognizes and binds N6-methyladenosine (m6A)-containing RNAs, a modification present at internal sites of mRNAs and some non-coding RNAs that plays a role in the efficiency of RNA processing and stability. Essential for ensuring a successful progression of the meiotic program in the germline by regulating the level of m6A-containing RNAs. Acts by binding and promoting degradation of m6A-containing mRNAs: the 3'-5' RNA helicase activity is required for this process and RNA degradation may be mediated by XRN1 exoribonuclease. Required for both spermatogenesis and oogenesis. This is 3'-5' RNA helicase YTHDC2 from Pongo abelii (Sumatran orangutan).